We begin with the raw amino-acid sequence, 307 residues long: 4-hydroxy-3-methylbut-2-enyl diphosphate reductase (307 aa).

Residue Cys12 coordinates [4Fe-4S] cluster. Residues His41 and His74 each contribute to the (2E)-4-hydroxy-3-methylbut-2-enyl diphosphate site. Residues His41 and His74 each contribute to the dimethylallyl diphosphate site. His41 and His74 together coordinate isopentenyl diphosphate. Residue Cys96 participates in [4Fe-4S] cluster binding. His124 contributes to the (2E)-4-hydroxy-3-methylbut-2-enyl diphosphate binding site. His124 serves as a coordination point for dimethylallyl diphosphate. His124 lines the isopentenyl diphosphate pocket. Catalysis depends on Glu126, which acts as the Proton donor. A (2E)-4-hydroxy-3-methylbut-2-enyl diphosphate-binding site is contributed by Thr165. Cys195 is a [4Fe-4S] cluster binding site. Positions 223, 224, 225, and 267 each coordinate (2E)-4-hydroxy-3-methylbut-2-enyl diphosphate. Dimethylallyl diphosphate is bound by residues Ser223, Ser224, Asn225, and Ser267. Ser223, Ser224, Asn225, and Ser267 together coordinate isopentenyl diphosphate.

The protein belongs to the IspH family. [4Fe-4S] cluster serves as cofactor.

The enzyme catalyses isopentenyl diphosphate + 2 oxidized [2Fe-2S]-[ferredoxin] + H2O = (2E)-4-hydroxy-3-methylbut-2-enyl diphosphate + 2 reduced [2Fe-2S]-[ferredoxin] + 2 H(+). It carries out the reaction dimethylallyl diphosphate + 2 oxidized [2Fe-2S]-[ferredoxin] + H2O = (2E)-4-hydroxy-3-methylbut-2-enyl diphosphate + 2 reduced [2Fe-2S]-[ferredoxin] + 2 H(+). Its pathway is isoprenoid biosynthesis; dimethylallyl diphosphate biosynthesis; dimethylallyl diphosphate from (2E)-4-hydroxy-3-methylbutenyl diphosphate: step 1/1. It functions in the pathway isoprenoid biosynthesis; isopentenyl diphosphate biosynthesis via DXP pathway; isopentenyl diphosphate from 1-deoxy-D-xylulose 5-phosphate: step 6/6. Catalyzes the conversion of 1-hydroxy-2-methyl-2-(E)-butenyl 4-diphosphate (HMBPP) into a mixture of isopentenyl diphosphate (IPP) and dimethylallyl diphosphate (DMAPP). Acts in the terminal step of the DOXP/MEP pathway for isoprenoid precursor biosynthesis. This chain is 4-hydroxy-3-methylbut-2-enyl diphosphate reductase, found in Magnetococcus marinus (strain ATCC BAA-1437 / JCM 17883 / MC-1).